A 125-amino-acid chain; its full sequence is Small ribosomal subunit protein bS6 (125 aa).

Belongs to the bacterial ribosomal protein bS6 family.

Functionally, binds together with bS18 to 16S ribosomal RNA. The chain is Small ribosomal subunit protein bS6 from Baumannia cicadellinicola subsp. Homalodisca coagulata.